We begin with the raw amino-acid sequence, 283 residues long: Formamidopyrimidine-DNA glycosylase (283 aa).

Pro-2 functions as the Schiff-base intermediate with DNA in the catalytic mechanism. Glu-3 acts as the Proton donor in catalysis. The active-site Proton donor; for beta-elimination activity is Lys-61. DNA contacts are provided by His-94, Arg-113, and Lys-159. The segment at 245 to 279 (DAYGREGESCRRCGAVMRREKFMNRSSFYCPKCQP) adopts an FPG-type zinc-finger fold. Arg-269 functions as the Proton donor; for delta-elimination activity in the catalytic mechanism.

The protein belongs to the FPG family. Monomer. The cofactor is Zn(2+).

The catalysed reaction is Hydrolysis of DNA containing ring-opened 7-methylguanine residues, releasing 2,6-diamino-4-hydroxy-5-(N-methyl)formamidopyrimidine.. The enzyme catalyses 2'-deoxyribonucleotide-(2'-deoxyribose 5'-phosphate)-2'-deoxyribonucleotide-DNA = a 3'-end 2'-deoxyribonucleotide-(2,3-dehydro-2,3-deoxyribose 5'-phosphate)-DNA + a 5'-end 5'-phospho-2'-deoxyribonucleoside-DNA + H(+). Functionally, involved in base excision repair of DNA damaged by oxidation or by mutagenic agents. Acts as a DNA glycosylase that recognizes and removes damaged bases. Has a preference for oxidized purines, such as 7,8-dihydro-8-oxoguanine (8-oxoG). Has AP (apurinic/apyrimidinic) lyase activity and introduces nicks in the DNA strand. Cleaves the DNA backbone by beta-delta elimination to generate a single-strand break at the site of the removed base with both 3'- and 5'-phosphates. In Mycobacterium avium (strain 104), this protein is Formamidopyrimidine-DNA glycosylase.